Consider the following 70-residue polypeptide: DNA-directed RNA polymerase subunit omega (70 aa).

The protein belongs to the RNA polymerase subunit omega family. As to quaternary structure, the RNAP catalytic core consists of 2 alpha, 1 beta, 1 beta' and 1 omega subunit. When a sigma factor is associated with the core the holoenzyme is formed, which can initiate transcription.

The enzyme catalyses RNA(n) + a ribonucleoside 5'-triphosphate = RNA(n+1) + diphosphate. Its function is as follows. Promotes RNA polymerase assembly. Latches the N- and C-terminal regions of the beta' subunit thereby facilitating its interaction with the beta and alpha subunits. The sequence is that of DNA-directed RNA polymerase subunit omega from Pelobacter propionicus (strain DSM 2379 / NBRC 103807 / OttBd1).